The primary structure comprises 616 residues: Chaperone protein HtpG (616 aa).

An a; substrate-binding region spans residues 1–334 (MAEKQIHTFQ…TADLPLNVSR (334 aa)). Positions 335–549 (EILQGNKVVD…ENEMGGNMER (215 aa)) are b. Residues 550 to 616 (IMKSLGQDVP…FVKRINKLIN (67 aa)) form a c region.

The protein belongs to the heat shock protein 90 family. Homodimer.

It is found in the cytoplasm. In terms of biological role, molecular chaperone. Has ATPase activity. In Ruthia magnifica subsp. Calyptogena magnifica, this protein is Chaperone protein HtpG.